A 496-amino-acid polypeptide reads, in one-letter code: Legumin (496 aa).

The N-terminal stretch at 1–21 (MAKLLALSLSFCFLLFGTCFA) is a signal peptide. Intrachain disulfides connect Cys-31/Cys-64 and Cys-107/Cys-318. The Cupin type-1 1 domain occupies 36-230 (LNALKPDNRI…ALNVNRRIVN (195 aa)). The interval 240–311 (EKGAIVKVKG…RGGSKSQRDN (72 aa)) is disordered. Positions 257–269 (PEKEPRQKRGSRQ) are enriched in basic and acidic residues. Residues 324 to 453 (QNIGSSSSPD…INVCQKKLLQ (130 aa)) form the Cupin type-1 2 domain.

It belongs to the 11S seed storage protein (globulins) family. In terms of assembly, hexamer; each subunit is composed of an acidic and a basic chain derived from a single precursor and linked by a disulfide bond.

In terms of biological role, seed storage protein. Alpha-amylase inhibitor. This chain is Legumin, found in Cicer arietinum (Chickpea).